Here is a 198-residue protein sequence, read N- to C-terminus: MKQFIDFIPLLLFFIVYKTEPRAVDILGNSYTFGGIFSATAMLIISSVVVYGILYIKQRKLEKSQWLTLVACLVFGSLTLAFHSETFLKWKAPVVNWLFAVAFAGSHFIGDRPLIQRIMGHALTLPAAIWTRLNIAWIIFFLFCGAANLYVAFTYQEFWVDFKVFGSLGMTLIFLVGQGIYLSRHLHDTTPNTPKSED.

5 helical membrane-spanning segments follow: residues 36–56 (IFSATAMLIISSVVVYGILYI), 67–87 (LTLVACLVFGSLTLAFHSETF), 90–110 (WKAPVVNWLFAVAFAGSHFIG), 133–153 (LNIAWIIFFLFCGAANLYVAF), and 162–182 (FKVFGSLGMTLIFLVGQGIYL).

It belongs to the YciB family.

Its subcellular location is the cell inner membrane. In terms of biological role, plays a role in cell envelope biogenesis, maintenance of cell envelope integrity and membrane homeostasis. In Pseudomonas syringae pv. tomato (strain ATCC BAA-871 / DC3000), this protein is Inner membrane-spanning protein YciB.